Consider the following 201-residue polypeptide: Small ribosomal subunit protein uS4 (201 aa).

Positions R92–V155 constitute an S4 RNA-binding domain.

This sequence belongs to the universal ribosomal protein uS4 family. In terms of assembly, part of the 30S ribosomal subunit. Contacts protein S5. The interaction surface between S4 and S5 is involved in control of translational fidelity.

Its function is as follows. One of the primary rRNA binding proteins, it binds directly to 16S rRNA where it nucleates assembly of the body of the 30S subunit. Functionally, with S5 and S12 plays an important role in translational accuracy. This is Small ribosomal subunit protein uS4 from Staphylococcus carnosus (strain TM300).